The chain runs to 175 residues: ATP synthase subunit b (175 aa).

The chain crosses the membrane as a helical span at residues Leu-20–Trp-40.

This sequence belongs to the ATPase B chain family. As to quaternary structure, F-type ATPases have 2 components, F(1) - the catalytic core - and F(0) - the membrane proton channel. F(1) has five subunits: alpha(3), beta(3), gamma(1), delta(1), epsilon(1). F(0) has four main subunits: a(1), b(2) and c(10-14). The alpha and beta chains form an alternating ring which encloses part of the gamma chain. F(1) is attached to F(0) by a central stalk formed by the gamma and epsilon chains, while a peripheral stalk is formed by the delta and b chains.

It localises to the cell inner membrane. F(1)F(0) ATP synthase produces ATP from ADP in the presence of a proton or sodium gradient. F-type ATPases consist of two structural domains, F(1) containing the extramembraneous catalytic core and F(0) containing the membrane proton channel, linked together by a central stalk and a peripheral stalk. During catalysis, ATP synthesis in the catalytic domain of F(1) is coupled via a rotary mechanism of the central stalk subunits to proton translocation. Its function is as follows. Component of the F(0) channel, it forms part of the peripheral stalk, linking F(1) to F(0). This Pelodictyon phaeoclathratiforme (strain DSM 5477 / BU-1) protein is ATP synthase subunit b.